A 61-amino-acid polypeptide reads, in one-letter code: Small ribosomal subunit protein uS14 (61 aa).

Positions 24, 27, 40, and 43 each coordinate Zn(2+).

It belongs to the universal ribosomal protein uS14 family. Zinc-binding uS14 subfamily. As to quaternary structure, part of the 30S ribosomal subunit. Contacts proteins S3 and S10. Zn(2+) is required as a cofactor.

Binds 16S rRNA, required for the assembly of 30S particles and may also be responsible for determining the conformation of the 16S rRNA at the A site. The chain is Small ribosomal subunit protein uS14 from Bifidobacterium longum (strain DJO10A).